Here is a 281-residue protein sequence, read N- to C-terminus: Aldo-keto reductase MMAR_1744 (281 aa).

Tyrosine 56 acts as the Proton donor in catalysis. Leucine 196, isoleucine 234, serine 237, threonine 245, asparagine 246, and arginine 272 together coordinate NADPH.

The protein belongs to the aldo/keto reductase family.

The polypeptide is Aldo-keto reductase MMAR_1744 (Mycobacterium marinum (strain ATCC BAA-535 / M)).